Consider the following 352-residue polypeptide: UDP-N-acetylglucosamine--N-acetylmuramyl-(pentapeptide) pyrophosphoryl-undecaprenol N-acetylglucosamine transferase (352 aa).

UDP-N-acetyl-alpha-D-glucosamine-binding positions include 14–16 (TGG), Asn-124, Arg-164, Ser-185, and Gln-285.

It belongs to the glycosyltransferase 28 family. MurG subfamily.

The protein resides in the cell inner membrane. The enzyme catalyses di-trans,octa-cis-undecaprenyl diphospho-N-acetyl-alpha-D-muramoyl-L-alanyl-D-glutamyl-meso-2,6-diaminopimeloyl-D-alanyl-D-alanine + UDP-N-acetyl-alpha-D-glucosamine = di-trans,octa-cis-undecaprenyl diphospho-[N-acetyl-alpha-D-glucosaminyl-(1-&gt;4)]-N-acetyl-alpha-D-muramoyl-L-alanyl-D-glutamyl-meso-2,6-diaminopimeloyl-D-alanyl-D-alanine + UDP + H(+). It participates in cell wall biogenesis; peptidoglycan biosynthesis. In terms of biological role, cell wall formation. Catalyzes the transfer of a GlcNAc subunit on undecaprenyl-pyrophosphoryl-MurNAc-pentapeptide (lipid intermediate I) to form undecaprenyl-pyrophosphoryl-MurNAc-(pentapeptide)GlcNAc (lipid intermediate II). This chain is UDP-N-acetylglucosamine--N-acetylmuramyl-(pentapeptide) pyrophosphoryl-undecaprenol N-acetylglucosamine transferase, found in Chlamydia trachomatis serovar L2 (strain ATCC VR-902B / DSM 19102 / 434/Bu).